We begin with the raw amino-acid sequence, 49 residues long: Astexin-2 (49 aa).

Residues 1-25 constitute a propeptide that is removed on maturation; it reads MTKRTTIAARRVGLIDLGKATRQTK. The segment at residues 26–34 is a cross-link (isoaspartyl glycine isopeptide (Gly-Asp)); sequence GLTQIQALD.

In terms of processing, this lasso peptide is hydrolyzed to a linear form by the isopeptidase AtxE2, in vitro. The isopeptidase AtxE2 only recognizes the threaded form (but not the unthreaded form).

It localises to the cytoplasm. Its subcellular location is the secreted. In terms of biological role, shows weak antimicrobial activity against its phylogenetic relative Caulobacter crescentus. Does not show activity against other bacteria tested (E.coli, Vibrio sp, Burkhoderia thailandensis, and Salmonella newport). The sequence is that of Astexin-2 from Asticcacaulis excentricus (strain ATCC 15261 / DSM 4724 / KCTC 12464 / NCIMB 9791 / VKM B-1370 / CB 48).